The sequence spans 286 residues: 3-methyl-2-oxobutanoate hydroxymethyltransferase (286 aa).

2 residues coordinate Mg(2+): D67 and D106. Residues 67–68 (DS), D106, and K136 each bind 3-methyl-2-oxobutanoate. A Mg(2+)-binding site is contributed by E138. E204 acts as the Proton acceptor in catalysis.

This sequence belongs to the PanB family. In terms of assembly, homodecamer; pentamer of dimers. Mg(2+) serves as cofactor.

It localises to the cytoplasm. It catalyses the reaction 3-methyl-2-oxobutanoate + (6R)-5,10-methylene-5,6,7,8-tetrahydrofolate + H2O = 2-dehydropantoate + (6S)-5,6,7,8-tetrahydrofolate. It functions in the pathway cofactor biosynthesis; (R)-pantothenate biosynthesis; (R)-pantoate from 3-methyl-2-oxobutanoate: step 1/2. Catalyzes the reversible reaction in which hydroxymethyl group from 5,10-methylenetetrahydrofolate is transferred onto alpha-ketoisovalerate to form ketopantoate. The protein is 3-methyl-2-oxobutanoate hydroxymethyltransferase of Mycobacterium leprae (strain TN).